The following is a 230-amino-acid chain: Cytidylate kinase (230 aa).

12 to 20 is an ATP binding site; the sequence is GPSGTGKST.

This sequence belongs to the cytidylate kinase family. Type 1 subfamily.

It localises to the cytoplasm. It carries out the reaction CMP + ATP = CDP + ADP. The catalysed reaction is dCMP + ATP = dCDP + ADP. This chain is Cytidylate kinase, found in Corynebacterium glutamicum (strain ATCC 13032 / DSM 20300 / JCM 1318 / BCRC 11384 / CCUG 27702 / LMG 3730 / NBRC 12168 / NCIMB 10025 / NRRL B-2784 / 534).